Reading from the N-terminus, the 405-residue chain is uncharacterized protein (405 aa).

Helical transmembrane passes span 19-39 (IVSI…PLAV), 48-68 (MGFS…ATLL), 85-105 (IVVF…LADI), 106-126 (ASAW…ILGI), 129-149 (SFAG…LHIG), 156-176 (GIVT…CYAW), 178-198 (GLQG…LLAL), 224-244 (GMAL…ITLF), 252-272 (GAAF…LLFP), 283-303 (VAMI…TAAM), 309-329 (IGVL…GVVA), 344-364 (TYTV…GLVM), and 366-386 (WAGV…ALLL).

This sequence belongs to the major facilitator superfamily. YhhS family.

Its subcellular location is the cell inner membrane. This is an uncharacterized protein from Salmonella enteritidis PT4 (strain P125109).